The primary structure comprises 159 residues: Transcriptional repressor NrdR (159 aa).

A zinc finger spans residues 3 to 34 (CPFCRHDDTQVVDSRVSEDGAAIRRRRRCSAC). Residues 49 to 139 (PAVVKKDGSR…VYRRFEDVSE (91 aa)) enclose the ATP-cone domain.

It belongs to the NrdR family. Requires Zn(2+) as cofactor.

Negatively regulates transcription of bacterial ribonucleotide reductase nrd genes and operons by binding to NrdR-boxes. The protein is Transcriptional repressor NrdR of Burkholderia cenocepacia (strain HI2424).